Here is a 1286-residue protein sequence, read N- to C-terminus: MAVISKVTYSLYDQKEINATDIIISHVKNDDDIGTVKDGRLGAMDGALCKTCGKTELECFGHWGKVSIYKTHIVKPEFISEIIRLLNYICIHCGLLRSREPYSDDINLKELSGHALRRLKDKILSKKKSCWNSECMQPYQKITFSKKKVCFVNKLDDINVPNSLIYQKLISIHEKFWPLLEIHQYPANLFYTDYFPIPPLIIRPAISFWIDSIPKETNELTYLLGMIVKNCNLNADEQVIQKAVIEYDDIKIISNNTSSINLSYITSGKNNMIRSYIVARRKDQTARSVIGPSTSITVNEVGMPAYIRNTLTEKIFVNAFTVDKVKQLLASNQVKFYFNKRLNQLTRIRQGKFIKNKIHLLPGDWVEVAVQEYTSIIFGRQPSLHRYNVIASSIRATEGDTIKISPGIVNSQNADFDGDEEWMILEQNPKAVIEQSILMYPTTLLKHDIHGAPVYGSIQDEIVAAYSLFRIQDLCLDEVLNILGKYGREFDPKGKCKFSGKDIYTYLIGEKINYPGLLKDGEIIANDVDSNFVVAMRHLSLAGLLSDHKSNVEGINFIIKSSYVFKRYLSIYGFGVTFKDLRPNSTFTNKLEAINVEKIELIKEAYAKYLNDVRDGKIVPLSKALEADYVESMLSNLTNLNIREIEEHMRQTLIDDPDNNLLKMAKAGYKVNPTELMYILGTYGQQRIDGEPAETRVLGRVLPYYLPDSKDPEGRGYILNSLTKGLTGSQYYFSMLVARSQSTDIVCETSRTGTLARKIIKKMEDMVVDGYGQVVIGNTLIKYAANYTKILGSVCKPVDLIYPDESMTWYLEISALWNKIKQGFVYSQKQKLAKKTLAPFNFLVFVKPTTEDNAIKVKDLYDMIHNVIDDVREKYFFTVSNIDFMEYIFLTHLNPSRIRITKETAITIFEKFYEKLNYTLGGGTPIGIISAQVLSEKFTQQALSSFHTTEKSGAVKQKLGFNEFNNLTNLSKNKTEIITLVSDDISKLQSVKINFEFVCLGELNPNITLRKETDRYVVDIIVNRLYIKRAEITELVVEYMIERFISFSVIVKEWGMETFIEDEDNIRFTVYLNFVEPEELNLSKFMMVLPGAANKGKISKFKIPISDYTGYDDFNQTKKLNKMTVELMNLKELGSFDLENVNVYPGVWNTYDIFGIEAAREYLCEAMLNTYGEGFDYLYQPCDLLASLLCASYEPESVNKFKFGAASTLKRATFGDNKALLNAALHKKSEPINDNSSCHFFSKVPNIGTGYYKYFIDLGLLMRMERKLSDKISSQKIKEMEETEDF.

It belongs to the poxviridae DNA-directed RNA polymerase 147 kDa subunit family. As to quaternary structure, the DNA-dependent RNA polymerase used for intermediate and late genes expression consists of eight subunits Rpo30/OPG66, Rpo7/OPG90, Rpo22/OPG103, Rpo147/OPG105, Rpo18/OPG119, Rpo19/OPG131, Rpo132/OPG151 and Rpo35/OPG156. The same holoenzyme, with the addition of the transcription-specificity factor OPG109, is used for early gene expression.

It is found in the virion. It carries out the reaction RNA(n) + a ribonucleoside 5'-triphosphate = RNA(n+1) + diphosphate. Functionally, part of the DNA-dependent RNA polymerase which catalyzes the transcription of viral DNA into RNA using the four ribonucleoside triphosphates as substrates. Responsible for the transcription of early, intermediate and late genes. DNA-dependent RNA polymerase associates with the early transcription factor (ETF), itself composed of OPG118 and OPG133, thereby allowing the early genes transcription. Late transcription, and probably also intermediate transcription, require newly synthesized RNA polymerase. This chain is DNA-directed RNA polymerase 147 kDa polypeptide (OPG105), found in Vaccinia virus (strain Ankara) (VACV).